The sequence spans 164 residues: Cyanate hydratase (164 aa).

Catalysis depends on residues R90, E93, and S116.

The protein belongs to the cyanase family.

The catalysed reaction is cyanate + hydrogencarbonate + 3 H(+) = NH4(+) + 2 CO2. Functionally, catalyzes the reaction of cyanate with bicarbonate to produce ammonia and carbon dioxide. This is Cyanate hydratase from Vitis vinifera (Grape).